The following is a 97-amino-acid chain: uncharacterized protein (97 aa).

This is an uncharacterized protein from Bacillus subtilis (strain 168).